A 141-amino-acid polypeptide reads, in one-letter code: Hemoglobin subunit alpha (141 aa).

The Globin domain occupies 1–141; it reads VLSPADKKNV…VSTVLTSKYR (141 aa). Ser-3 is subject to Phosphoserine. 2 positions are modified to N6-succinyllysine: Lys-7 and Lys-11. Position 16 is an N6-acetyllysine; alternate (Lys-16). Residue Lys-16 is modified to N6-succinyllysine; alternate. Tyr-24 is subject to Phosphotyrosine. The residue at position 35 (Ser-35) is a Phosphoserine. Lys-40 bears the N6-succinyllysine mark. Residue Ser-49 is modified to Phosphoserine. Position 58 (His-58) interacts with O2. His-87 contacts heme b. Ser-102 carries the phosphoserine modification. At Thr-108 the chain carries Phosphothreonine. Phosphoserine occurs at positions 124 and 131. Thr-134 and Thr-137 each carry phosphothreonine. Ser-138 carries the post-translational modification Phosphoserine.

Belongs to the globin family. Heterotetramer of two alpha chains and two beta chains. Red blood cells.

Functionally, involved in oxygen transport from the lung to the various peripheral tissues. Its function is as follows. Hemopressin acts as an antagonist peptide of the cannabinoid receptor CNR1. Hemopressin-binding efficiently blocks cannabinoid receptor CNR1 and subsequent signaling. The sequence is that of Hemoglobin subunit alpha (HBA) from Spermophilus citellus (European ground squirrel).